Consider the following 350-residue polypeptide: 3-dehydroquinate synthase (350 aa).

NAD(+) is bound by residues 63-68 (DGEEYK), 97-101 (GVIGD), 121-122 (TT), K134, K143, and 161-164 (FLKT). Zn(2+)-binding residues include E176, H235, and H252.

The protein belongs to the sugar phosphate cyclases superfamily. Dehydroquinate synthase family. Requires Co(2+) as cofactor. The cofactor is Zn(2+). NAD(+) is required as a cofactor.

The protein resides in the cytoplasm. The catalysed reaction is 7-phospho-2-dehydro-3-deoxy-D-arabino-heptonate = 3-dehydroquinate + phosphate. The protein operates within metabolic intermediate biosynthesis; chorismate biosynthesis; chorismate from D-erythrose 4-phosphate and phosphoenolpyruvate: step 2/7. Catalyzes the conversion of 3-deoxy-D-arabino-heptulosonate 7-phosphate (DAHP) to dehydroquinate (DHQ). The polypeptide is 3-dehydroquinate synthase (Sulfurovum sp. (strain NBC37-1)).